The primary structure comprises 120 residues: Large ribosomal subunit protein uL24 (120 aa).

Belongs to the universal ribosomal protein uL24 family. Part of the 50S ribosomal subunit.

One of two assembly initiator proteins, it binds directly to the 5'-end of the 23S rRNA, where it nucleates assembly of the 50S subunit. In terms of biological role, located at the polypeptide exit tunnel on the outside of the subunit. This is Large ribosomal subunit protein uL24 from Methanocaldococcus jannaschii (strain ATCC 43067 / DSM 2661 / JAL-1 / JCM 10045 / NBRC 100440) (Methanococcus jannaschii).